We begin with the raw amino-acid sequence, 284 residues long: D-tagatose-1,6-bisphosphate aldolase subunit GatY (284 aa).

Residue Asp-82 is the Proton donor of the active site. 2 residues coordinate Zn(2+): His-83 and His-180. Gly-181 contributes to the dihydroxyacetone phosphate binding site. A Zn(2+)-binding site is contributed by His-208. Dihydroxyacetone phosphate-binding positions include 209 to 211 (GAS) and 230 to 233 (NVAT).

The protein belongs to the class II fructose-bisphosphate aldolase family. TagBP aldolase GatY subfamily. In terms of assembly, forms a complex with GatZ. It depends on Zn(2+) as a cofactor.

It catalyses the reaction D-tagatofuranose 1,6-bisphosphate = D-glyceraldehyde 3-phosphate + dihydroxyacetone phosphate. It participates in carbohydrate metabolism; D-tagatose 6-phosphate degradation; D-glyceraldehyde 3-phosphate and glycerone phosphate from D-tagatose 6-phosphate: step 2/2. In terms of biological role, catalytic subunit of the tagatose-1,6-bisphosphate aldolase GatYZ, which catalyzes the reversible aldol condensation of dihydroxyacetone phosphate (DHAP or glycerone-phosphate) with glyceraldehyde 3-phosphate (G3P) to produce tagatose 1,6-bisphosphate (TBP). Requires GatZ subunit for full activity and stability. Is involved in the catabolism of galactitol. In Klebsiella pneumoniae subsp. pneumoniae (strain ATCC 700721 / MGH 78578), this protein is D-tagatose-1,6-bisphosphate aldolase subunit GatY.